Reading from the N-terminus, the 192-residue chain is Probable GTP-binding protein EngB (192 aa).

An EngB-type G domain is found at 22–192; it reads QLPEIVFVGR…LLEQLAIYTG (171 aa). GTP contacts are provided by residues 30–37, 57–61, 75–78, 142–145, and 172–174; these read GRSNVGKS, GKTQL, DLPG, TKYD, and YSA. The Mg(2+) site is built by Ser-37 and Thr-59.

It belongs to the TRAFAC class TrmE-Era-EngA-EngB-Septin-like GTPase superfamily. EngB GTPase family. It depends on Mg(2+) as a cofactor.

In terms of biological role, necessary for normal cell division and for the maintenance of normal septation. This is Probable GTP-binding protein EngB from Chlorobium phaeobacteroides (strain BS1).